Reading from the N-terminus, the 148-residue chain is uncharacterized protein (148 aa).

Positions 21, 24, 88, and 117 each coordinate [4Fe-4S] cluster.

This sequence belongs to the complex I 20 kDa subunit family. The cofactor is [4Fe-4S] cluster.

This is an uncharacterized protein from Methanocaldococcus jannaschii (strain ATCC 43067 / DSM 2661 / JAL-1 / JCM 10045 / NBRC 100440) (Methanococcus jannaschii).